The chain runs to 490 residues: MIIETNQACDLVIFGTKGDLARRKLLPALYKLEKSQKIHPDTRIIGTGRADWNTEDYIKIVKKAIKMFLNEKIDEKIWKKLRSRLNFFYIDVFQDLHFLELKNILNQKKNIIIYYCAVPSNTFNAIFTGLGKVNLNSFPSRIIIEKPLGVSLETSKKINNQIAKYFLESQIFRIDHYLGKESILNLLALRFSNSFFFHSWNNKIIDHIQITVSEEVGIENRWNYFDQMGQTRDMVQNHLLQILTIVSMDKPKNITPEGIRDEKLKILRSLKKIDLNEIHIKTARGQYASGIINGKKVPSYIEENGANKHSKTETFVSIKVDINNDRWFGVPFYLRTGKRLAYKYSEIVIVFKKISKNLFQEFNKNLSPNKLIIRLEPNESIKIYFLNKVPGLSKEYKLKSDKMEFNFNINNTKNFVDAYERLLFESMRGIQSLFVCREEVEEAWKWIDPIINGWKKTNINTVQLYKSGTWGPKSSDEIIMRDGRFWETFN.

Residues Arg-49, 91-92 (DV), and Lys-146 contribute to the NADP(+) site. Residues His-176, Lys-180, Glu-214, and Asp-233 each coordinate substrate. The active-site Proton acceptor is the His-238. Substrate-binding residues include Lys-338 and Lys-343.

The protein belongs to the glucose-6-phosphate dehydrogenase family.

The enzyme catalyses D-glucose 6-phosphate + NADP(+) = 6-phospho-D-glucono-1,5-lactone + NADPH + H(+). The protein operates within carbohydrate degradation; pentose phosphate pathway; D-ribulose 5-phosphate from D-glucose 6-phosphate (oxidative stage): step 1/3. Catalyzes the oxidation of glucose 6-phosphate to 6-phosphogluconolactone. The polypeptide is Glucose-6-phosphate 1-dehydrogenase (Buchnera aphidicola subsp. Schizaphis graminum (strain Sg)).